We begin with the raw amino-acid sequence, 760 residues long: Catalase-peroxidase (760 aa).

The signal sequence occupies residues 1–45 (MKGTPFRSPHLYQEGSSCMHRTIRSVAAVLTVVLSATIPMVPAWS). Residues 124-245 (WHGAGTYRTY…LAATQMGLIY (122 aa)) constitute a cross-link (tryptophyl-tyrosyl-methioninium (Trp-Tyr) (with M-271)). His125 acts as the Proton acceptor in catalysis. The tryptophyl-tyrosyl-methioninium (Tyr-Met) (with W-124) cross-link spans 245–271 (YVNPEGPNGVPDPVAAARDIREAFGGM). Residue His286 participates in heme b binding.

It belongs to the peroxidase family. Peroxidase/catalase subfamily. Homodimer or homotetramer. The cofactor is heme b. In terms of processing, formation of the three residue Trp-Tyr-Met cross-link is important for the catalase, but not the peroxidase activity of the enzyme.

It carries out the reaction H2O2 + AH2 = A + 2 H2O. It catalyses the reaction 2 H2O2 = O2 + 2 H2O. Functionally, bifunctional enzyme with both catalase and broad-spectrum peroxidase activity. This is Catalase-peroxidase from Granulibacter bethesdensis (strain ATCC BAA-1260 / CGDNIH1).